A 1706-amino-acid chain; its full sequence is Brefeldin A-inhibited guanine nucleotide-exchange protein 4 (1706 aa).

Residues 555–742 form the SEC7 domain; sequence MLEQRRAYKI…GSLYDRVVKE (188 aa). E657 is a catalytic residue.

In terms of assembly, homodimer.

Its subcellular location is the cytoplasm. The protein localises to the cytosol. It localises to the membrane. With respect to regulation, inhibited by brefeldin A. Its function is as follows. Activates the ARF proteins by exchanging bound GDP for free GTP. Plays a role in vesicular protein sorting. The protein is Brefeldin A-inhibited guanine nucleotide-exchange protein 4 (BIG4) of Arabidopsis thaliana (Mouse-ear cress).